The primary structure comprises 115 residues: Nucleoid-associated protein alr5067 (115 aa).

The protein belongs to the YbaB/EbfC family. In terms of assembly, homodimer.

Its subcellular location is the cytoplasm. It localises to the nucleoid. Binds to DNA and alters its conformation. May be involved in regulation of gene expression, nucleoid organization and DNA protection. The polypeptide is Nucleoid-associated protein alr5067 (Nostoc sp. (strain PCC 7120 / SAG 25.82 / UTEX 2576)).